The sequence spans 504 residues: Glutamate--tRNA ligase (504 aa).

The 'HIGH' region motif lies at Pro-14–Gly-24. Residues Lys-261–Arg-265 carry the 'KMSKS' region motif. Lys-264 is an ATP binding site.

Belongs to the class-I aminoacyl-tRNA synthetase family. Glutamate--tRNA ligase type 1 subfamily. In terms of assembly, monomer.

The protein resides in the cytoplasm. It catalyses the reaction tRNA(Glu) + L-glutamate + ATP = L-glutamyl-tRNA(Glu) + AMP + diphosphate. Its function is as follows. Catalyzes the attachment of glutamate to tRNA(Glu) in a two-step reaction: glutamate is first activated by ATP to form Glu-AMP and then transferred to the acceptor end of tRNA(Glu). The protein is Glutamate--tRNA ligase of Chlorobium luteolum (strain DSM 273 / BCRC 81028 / 2530) (Pelodictyon luteolum).